We begin with the raw amino-acid sequence, 135 residues long: Adult cuticle protein 1 (135 aa).

A signal peptide spans 1 to 19; the sequence is MKFAVAVIFTLALAMGVQS. Tandem repeats lie at residues 72–75, 78–81, and 128–131.

In terms of tissue distribution, detected in the epidermis underlying the head and thorax (including legs and wings), but not in the abdominal epidermis of newly eclosed flies.

Functionally, component of the cuticle of the adult fruit fly. Could be involved in thickening of the hard adult cuticle. This is Adult cuticle protein 1 (Acp1) from Drosophila melanogaster (Fruit fly).